We begin with the raw amino-acid sequence, 239 residues long: Serine protease SplC (239 aa).

An N-terminal signal peptide occupies residues 1–36; the sequence is MNKNIVIKSMAALAILTSVTGINAAVVEETQQIANA. Catalysis depends on charge relay system residues His75, Asp113, and Ser193.

This sequence belongs to the peptidase S1B family.

It localises to the secreted. This chain is Serine protease SplC (splC), found in Staphylococcus aureus (strain MW2).